The following is a 221-amino-acid chain: DNA mismatch repair protein MutH (221 aa).

This sequence belongs to the MutH family.

The protein resides in the cytoplasm. Functionally, sequence-specific endonuclease that cleaves unmethylated GATC sequences. It is involved in DNA mismatch repair. The sequence is that of DNA mismatch repair protein MutH from Vibrio cholerae serotype O1 (strain ATCC 39315 / El Tor Inaba N16961).